A 95-amino-acid chain; its full sequence is Aspartyl/glutamyl-tRNA(Asn/Gln) amidotransferase subunit C (95 aa).

It belongs to the GatC family. Heterotrimer of A, B and C subunits.

It carries out the reaction L-glutamyl-tRNA(Gln) + L-glutamine + ATP + H2O = L-glutaminyl-tRNA(Gln) + L-glutamate + ADP + phosphate + H(+). It catalyses the reaction L-aspartyl-tRNA(Asn) + L-glutamine + ATP + H2O = L-asparaginyl-tRNA(Asn) + L-glutamate + ADP + phosphate + 2 H(+). Its function is as follows. Allows the formation of correctly charged Asn-tRNA(Asn) or Gln-tRNA(Gln) through the transamidation of misacylated Asp-tRNA(Asn) or Glu-tRNA(Gln) in organisms which lack either or both of asparaginyl-tRNA or glutaminyl-tRNA synthetases. The reaction takes place in the presence of glutamine and ATP through an activated phospho-Asp-tRNA(Asn) or phospho-Glu-tRNA(Gln). The polypeptide is Aspartyl/glutamyl-tRNA(Asn/Gln) amidotransferase subunit C (Rhodopseudomonas palustris (strain TIE-1)).